A 437-amino-acid polypeptide reads, in one-letter code: Protein translocase subunit SecY (437 aa).

Transmembrane regions (helical) follow at residues 19–39 (LFTLGIIVIYRIGTHIPIPGV), 69–89 (LLQITIFALGIMPYITASIIL), 122–142 (VALAVLQGTGLVATARSGALF), 157–177 (IFTTLTMVVTMTAGTAVVMWL), 189–209 (GMSILMFISIAATFPSALWSI), 219–239 (WIEFGIVIAVGLVMVALVVFV), 275–295 (GIIPVIFASSLLYIPALVVQF), 318–338 (HITVYFFLIIFFAFFYVAISF), 378–398 (GSLYLGLIALVPTMALAPLGA), and 400–420 (QNFPFGGTSILIIVGVGLETV).

This sequence belongs to the SecY/SEC61-alpha family. In terms of assembly, component of the Sec protein translocase complex. Heterotrimer consisting of SecY, SecE and SecG subunits. The heterotrimers can form oligomers, although 1 heterotrimer is thought to be able to translocate proteins. Interacts with the ribosome. Interacts with SecDF, and other proteins may be involved. Interacts with SecA.

The protein localises to the cell membrane. Its function is as follows. The central subunit of the protein translocation channel SecYEG. Consists of two halves formed by TMs 1-5 and 6-10. These two domains form a lateral gate at the front which open onto the bilayer between TMs 2 and 7, and are clamped together by SecE at the back. The channel is closed by both a pore ring composed of hydrophobic SecY resides and a short helix (helix 2A) on the extracellular side of the membrane which forms a plug. The plug probably moves laterally to allow the channel to open. The ring and the pore may move independently. This Streptomyces scabiei protein is Protein translocase subunit SecY.